The following is a 188-amino-acid chain: Pyridoxal 5'-phosphate synthase subunit PdxT (188 aa).

47-49 (GES) contacts L-glutamine. The Nucleophile role is filled by Cys-79. L-glutamine-binding positions include Arg-106 and 134 to 135 (IR). Catalysis depends on charge relay system residues His-169 and Glu-171.

The protein belongs to the glutaminase PdxT/SNO family. In the presence of PdxS, forms a dodecamer of heterodimers. Only shows activity in the heterodimer.

It catalyses the reaction aldehydo-D-ribose 5-phosphate + D-glyceraldehyde 3-phosphate + L-glutamine = pyridoxal 5'-phosphate + L-glutamate + phosphate + 3 H2O + H(+). The catalysed reaction is L-glutamine + H2O = L-glutamate + NH4(+). Its pathway is cofactor biosynthesis; pyridoxal 5'-phosphate biosynthesis. Its function is as follows. Catalyzes the hydrolysis of glutamine to glutamate and ammonia as part of the biosynthesis of pyridoxal 5'-phosphate. The resulting ammonia molecule is channeled to the active site of PdxS. The polypeptide is Pyridoxal 5'-phosphate synthase subunit PdxT (Caldicellulosiruptor saccharolyticus (strain ATCC 43494 / DSM 8903 / Tp8T 6331)).